Consider the following 695-residue polypeptide: Elongation factor G 1 (695 aa).

The tr-type G domain maps to 6–282 (STFRNIGISA…AITYYLPDPT (277 aa)). GTP is bound by residues 15–22 (AHIDSGKT), 82–86 (DTPGH), and 136–139 (NKCD).

The protein belongs to the TRAFAC class translation factor GTPase superfamily. Classic translation factor GTPase family. EF-G/EF-2 subfamily.

The protein resides in the cytoplasm. In terms of biological role, catalyzes the GTP-dependent ribosomal translocation step during translation elongation. During this step, the ribosome changes from the pre-translocational (PRE) to the post-translocational (POST) state as the newly formed A-site-bound peptidyl-tRNA and P-site-bound deacylated tRNA move to the P and E sites, respectively. Catalyzes the coordinated movement of the two tRNA molecules, the mRNA and conformational changes in the ribosome. This is Elongation factor G 1 (fusA) from Treponema pallidum (strain Nichols).